The sequence spans 663 residues: UvrABC system protein B (663 aa).

The segment covering 1–10 (MIDKRDDKPF) has biased composition (basic and acidic residues). The interval 1 to 23 (MIDKRDDKPFKLKSKYKPSGDQP) is disordered. In terms of domain architecture, Helicase ATP-binding spans 31 to 418 (DNIEGGEKAQ…TNTIIEQIIR (388 aa)). 44 to 51 (GATGTGKT) is an ATP binding site. Residues 97 to 120 (YYDYYQPEAYVPSSDTYIEKDSSV) carry the Beta-hairpin motif. Positions 435–601 (QMDDLLGEIN…TIKKDIRGLI (167 aa)) constitute a Helicase C-terminal domain. The 36-residue stretch at 627 to 662 (KEAINALQKQMQEAAELLDFELAAQMRDLILELKLM) folds into the UVR domain.

Belongs to the UvrB family. Forms a heterotetramer with UvrA during the search for lesions. Interacts with UvrC in an incision complex.

It is found in the cytoplasm. In terms of biological role, the UvrABC repair system catalyzes the recognition and processing of DNA lesions. A damage recognition complex composed of 2 UvrA and 2 UvrB subunits scans DNA for abnormalities. Upon binding of the UvrA(2)B(2) complex to a putative damaged site, the DNA wraps around one UvrB monomer. DNA wrap is dependent on ATP binding by UvrB and probably causes local melting of the DNA helix, facilitating insertion of UvrB beta-hairpin between the DNA strands. Then UvrB probes one DNA strand for the presence of a lesion. If a lesion is found the UvrA subunits dissociate and the UvrB-DNA preincision complex is formed. This complex is subsequently bound by UvrC and the second UvrB is released. If no lesion is found, the DNA wraps around the other UvrB subunit that will check the other stand for damage. In Streptococcus pyogenes serotype M3 (strain ATCC BAA-595 / MGAS315), this protein is UvrABC system protein B.